The chain runs to 486 residues: ATP synthase subunit beta (486 aa).

171 to 178 contributes to the ATP binding site; it reads GGAGVGKT.

It belongs to the ATPase alpha/beta chains family. F-type ATPases have 2 components, CF(1) - the catalytic core - and CF(0) - the membrane proton channel. CF(1) has five subunits: alpha(3), beta(3), gamma(1), delta(1), epsilon(1). CF(0) has three main subunits: a(1), b(2) and c(9-12). The alpha and beta chains form an alternating ring which encloses part of the gamma chain. CF(1) is attached to CF(0) by a central stalk formed by the gamma and epsilon chains, while a peripheral stalk is formed by the delta and b chains.

Its subcellular location is the cell membrane. It catalyses the reaction ATP + H2O + 4 H(+)(in) = ADP + phosphate + 5 H(+)(out). Produces ATP from ADP in the presence of a proton gradient across the membrane. The catalytic sites are hosted primarily by the beta subunits. This Salinispora tropica (strain ATCC BAA-916 / DSM 44818 / JCM 13857 / NBRC 105044 / CNB-440) protein is ATP synthase subunit beta.